We begin with the raw amino-acid sequence, 237 residues long: (5-formylfuran-3-yl)methyl phosphate synthase (237 aa).

Lys-27 functions as the Schiff-base intermediate with substrate in the catalytic mechanism. Lys-85 serves as the catalytic Proton acceptor.

Belongs to the MfnB family.

It catalyses the reaction 2 D-glyceraldehyde 3-phosphate = 4-(hydroxymethyl)-2-furancarboxaldehyde phosphate + phosphate + 2 H2O. It participates in cofactor biosynthesis; methanofuran biosynthesis. In terms of biological role, catalyzes the formation of 4-(hydroxymethyl)-2-furancarboxaldehyde phosphate (4-HFC-P) from two molecules of glyceraldehyde-3-P (GA-3-P). This is (5-formylfuran-3-yl)methyl phosphate synthase from Methanobrevibacter smithii (strain ATCC 35061 / DSM 861 / OCM 144 / PS).